The primary structure comprises 201 residues: Adenylyl-sulfate kinase (201 aa).

Residue 35–42 participates in ATP binding; that stretch reads GLSGSGKS. Residue Ser-109 is the Phosphoserine intermediate of the active site.

This sequence belongs to the APS kinase family.

The enzyme catalyses adenosine 5'-phosphosulfate + ATP = 3'-phosphoadenylyl sulfate + ADP + H(+). The protein operates within sulfur metabolism; hydrogen sulfide biosynthesis; sulfite from sulfate: step 2/3. Catalyzes the synthesis of activated sulfate. This is Adenylyl-sulfate kinase from Shigella flexneri.